A 369-amino-acid chain; its full sequence is MLTVYTQSDQALSWIERHGHCPPVFVCVLGFTETGLIPGISAAGKTPADRKLTAIADAEFLIKGTTAGATYPLPPLISGVSPVFITKALVDALHTPVYLFNSGLPIPPAVPVINLDGQPARCLSTGQALPLALVEHLFQQGLQWGAQLAQEHAESYLVLSECVVGGTTTALGVLLGLGIDAGGKVNSSHPHCNHQQKLALVRQSLEHHSPHLNAMEVVAAVGDPMQMVVAGMAIAASHSTGVMLAGGTQMLAVYALIQALTRQQNLAVDFSRLVVGTTKWVCEDASGDTVGLANLLAPVSLLAPQLSFSSSVYPQLQVYEQGFVKEGVGAGAMAIAAHLYKNWGQEQLLELIENLITRELGQVKEKKQQ.

Belongs to the UPF0284 family.

This Synechocystis sp. (strain ATCC 27184 / PCC 6803 / Kazusa) protein is UPF0284 protein sll1500.